The chain runs to 399 residues: Phosphoglycerate kinase (399 aa).

Substrate contacts are provided by residues 24 to 26 (DLN), arginine 41, 64 to 67 (HLGR), arginine 123, and arginine 160. ATP contacts are provided by residues lysine 210, glycine 298, glutamate 329, and 355 to 358 (GGDS).

It belongs to the phosphoglycerate kinase family. Monomer.

The protein localises to the cytoplasm. It carries out the reaction (2R)-3-phosphoglycerate + ATP = (2R)-3-phospho-glyceroyl phosphate + ADP. Its pathway is carbohydrate degradation; glycolysis; pyruvate from D-glyceraldehyde 3-phosphate: step 2/5. This is Phosphoglycerate kinase from Salinispora arenicola (strain CNS-205).